The primary structure comprises 679 residues: UvrABC system protein C (679 aa).

The region spanning 65-143 (NSPGVYRMLN…IKRLRPRFNV (79 aa)) is the GIY-YIG domain. The 36-residue stretch at 253–288 (QKVKSHMAEAMNQAAEDLDFERAAIYRDRLAALSHV) folds into the UVR domain.

It belongs to the UvrC family. In terms of assembly, interacts with UvrB in an incision complex.

The protein resides in the cytoplasm. Functionally, the UvrABC repair system catalyzes the recognition and processing of DNA lesions. UvrC both incises the 5' and 3' sides of the lesion. The N-terminal half is responsible for the 3' incision and the C-terminal half is responsible for the 5' incision. This is UvrABC system protein C from Rhizobium etli (strain ATCC 51251 / DSM 11541 / JCM 21823 / NBRC 15573 / CFN 42).